The primary structure comprises 131 residues: Holo-[acyl-carrier-protein] synthase (131 aa).

Mg(2+)-binding residues include Asp-8 and Glu-63.

Belongs to the P-Pant transferase superfamily. AcpS family. It depends on Mg(2+) as a cofactor.

It is found in the cytoplasm. It carries out the reaction apo-[ACP] + CoA = holo-[ACP] + adenosine 3',5'-bisphosphate + H(+). Functionally, transfers the 4'-phosphopantetheine moiety from coenzyme A to a Ser of acyl-carrier-protein. In Shewanella pealeana (strain ATCC 700345 / ANG-SQ1), this protein is Holo-[acyl-carrier-protein] synthase.